We begin with the raw amino-acid sequence, 306 residues long: Glutaminase (306 aa).

S64, N115, E159, N166, Y190, Y242, and V260 together coordinate substrate.

This sequence belongs to the glutaminase family. As to quaternary structure, homotetramer.

It catalyses the reaction L-glutamine + H2O = L-glutamate + NH4(+). This is Glutaminase from Vibrio atlanticus (strain LGP32) (Vibrio splendidus (strain Mel32)).